A 780-amino-acid chain; its full sequence is Ino eighty subunit 1 (780 aa).

Disordered regions lie at residues 1–25 and 563–780; these read MADVESAGVDDSFAQSEPHDEQQIH and ANGP…PGWN. Positions 563-584 are enriched in basic and acidic residues; the sequence is ANGPRRDRKKEREERQKAREEA. Residues 600–613 show a composition bias toward basic residues; that stretch reads SRARAQRNAKRKLA. A compositionally biased stretch (low complexity) spans 614–635; sequence RAAAAASSTPSASTPKTAAARS. Acidic residues-rich tracts occupy residues 676-686 and 723-751; these read LEGEESLDDID and DADDALSSDEEEEEAEDEELDEMDVEGDD.

In terms of assembly, component of the chromatin-remodeling INO80 complex.

It is found in the nucleus. Probably involved in transcription regulation via its interaction with the INO80 complex, a chromatin-remodeling complex. In Emericella nidulans (strain FGSC A4 / ATCC 38163 / CBS 112.46 / NRRL 194 / M139) (Aspergillus nidulans), this protein is Ino eighty subunit 1.